A 380-amino-acid polypeptide reads, in one-letter code: Cytochrome b (380 aa).

A run of 4 helical transmembrane segments spans residues 34 to 54, 78 to 99, 114 to 134, and 179 to 199; these read FGSL…LLAM, WLIR…FLHI, WNTG…GYVL, and FFAL…IHLT. H84 and H98 together coordinate heme b. Heme b is bound by residues H183 and H197. H202 is a binding site for a ubiquinone. The next 4 membrane-spanning stretches (helical) occupy residues 227 to 247, 289 to 309, 321 to 341, and 348 to 368; these read FKDI…ALFS, LGGV…PFLH, LSQT…WIGS, and FIII…ILFP.

The protein belongs to the cytochrome b family. The cytochrome bc1 complex contains 11 subunits: 3 respiratory subunits (MT-CYB, CYC1 and UQCRFS1), 2 core proteins (UQCRC1 and UQCRC2) and 6 low-molecular weight proteins (UQCRH/QCR6, UQCRB/QCR7, UQCRQ/QCR8, UQCR10/QCR9, UQCR11/QCR10 and a cleavage product of UQCRFS1). This cytochrome bc1 complex then forms a dimer. Requires heme b as cofactor.

It localises to the mitochondrion inner membrane. In terms of biological role, component of the ubiquinol-cytochrome c reductase complex (complex III or cytochrome b-c1 complex) that is part of the mitochondrial respiratory chain. The b-c1 complex mediates electron transfer from ubiquinol to cytochrome c. Contributes to the generation of a proton gradient across the mitochondrial membrane that is then used for ATP synthesis. In Gallus gallus (Chicken), this protein is Cytochrome b (MT-CYB).